The chain runs to 362 residues: UDP-arabinopyranose mutase 3 (362 aa).

A DXD motif motif is present at residues 106–108 (DDD). R154 is a glycosylation site (N-linked (Glc...) arginine).

Belongs to the RGP family. In terms of assembly, heterodimer with RGP1. Mn(2+) is required as a cofactor. Requires Mg(2+) as cofactor. Reversibly glycosylated in vitro by UDP-glucose, UDP-xylose and UDP-galactose, but not UDP-mannose. In terms of tissue distribution, specifically expressed in developing seeds.

It localises to the cytoplasm. Its subcellular location is the cytosol. The protein resides in the golgi apparatus. It catalyses the reaction UDP-beta-L-arabinofuranose = UDP-beta-L-arabinopyranose. Its function is as follows. UDP-L-arabinose mutase involved in the biosynthesis of cell wall non-cellulosic polysaccharides. Catalyzes the interconvertion of UDP-L-arabinopyranose (UDP-Arap) and UDP-L-arabinofuranose (UDP-Araf). Preferentially catalyzes the formation of UDP-Arap from UDP-Araf. At thermodynamic equilibrium in vitro the ratio of the pyranose form over the furanose form is 95:5. Is not active on other UDP-sugars (UDP-Gal, UDP-Xyl, UDP-Glc, GDP-Man and GDP-Fuc). Is probably active as heteromer in vivo. The protein is UDP-arabinopyranose mutase 3 of Arabidopsis thaliana (Mouse-ear cress).